Here is a 465-residue protein sequence, read N- to C-terminus: Glutamate--tRNA ligase (465 aa).

The 'HIGH' region signature appears at 8-18; sequence PSPTGDLHIGG. The short motif at 235–239 is the 'KMSKS' region element; it reads RLSKR. Residue Lys238 coordinates ATP.

It belongs to the class-I aminoacyl-tRNA synthetase family. Glutamate--tRNA ligase type 1 subfamily. Monomer.

The protein resides in the cytoplasm. It carries out the reaction tRNA(Glu) + L-glutamate + ATP = L-glutamyl-tRNA(Glu) + AMP + diphosphate. In terms of biological role, catalyzes the attachment of glutamate to tRNA(Glu) in a two-step reaction: glutamate is first activated by ATP to form Glu-AMP and then transferred to the acceptor end of tRNA(Glu). This chain is Glutamate--tRNA ligase, found in Dichelobacter nodosus (strain VCS1703A).